A 217-amino-acid chain; its full sequence is MTALPFPVAEEPDAFTAETGRKLFAGPSEFVKGVVAMSGLPPADRVEVCFAGRSNVGKSSLINALTGTKGLARASNTPGRTQEINFFTQGPELYLVDLPGYGYANAPLKVVEKWQKLLKQYLSGRQTLRRAFVLIDARHGVKAVDDEIMKLLDTSAVTFQCVLTKADKVKAAERDKVLAQVRAALAKHPAAYPEIVLTSSEKGDGIATLRSIIAHLE.

Residues 44 to 217 enclose the EngB-type G domain; it reads DRVEVCFAGR…TLRSIIAHLE (174 aa). GTP contacts are provided by residues 52–59, 79–83, 97–100, 164–167, and 198–200; these read GRSNVGKS, GRTQE, DLPG, TKAD, and TSS. Mg(2+) contacts are provided by Ser59 and Thr81.

This sequence belongs to the TRAFAC class TrmE-Era-EngA-EngB-Septin-like GTPase superfamily. EngB GTPase family. Mg(2+) is required as a cofactor.

Functionally, necessary for normal cell division and for the maintenance of normal septation. The protein is Probable GTP-binding protein EngB of Ruegeria pomeroyi (strain ATCC 700808 / DSM 15171 / DSS-3) (Silicibacter pomeroyi).